A 157-amino-acid polypeptide reads, in one-letter code: Ribosome maturation factor RimP (157 aa).

Belongs to the RimP family.

The protein resides in the cytoplasm. In terms of biological role, required for maturation of 30S ribosomal subunits. The polypeptide is Ribosome maturation factor RimP (Petrotoga mobilis (strain DSM 10674 / SJ95)).